We begin with the raw amino-acid sequence, 367 residues long: Protein SGT1 homolog (367 aa).

TPR repeat units follow at residues 6–39, 40–73, and 75–107; these read ASDL…SPAT, AELY…DPSM, and KAYL…ASGD. Residues 165–254 form the CS domain; the sequence is KPKYRHDFYN…AEQITWTSLD (90 aa). Disordered regions lie at residues 261 to 289 and 347 to 367; these read AVPQ…DWDK and VGSK…KWEY. The region spanning 277-367 is the SGS domain; the sequence is SYPSSKSKKD…DGMELKKWEY (91 aa).

This sequence belongs to the SGT1 family. In terms of assembly, interacts (via CS domain) with RAR1 (via CHORD 2 domain). Interacts with RAD6. As to expression, expressed in roots, root tips, shoot apical meristem (SAM), young leaves, flag leaves and ears.

The protein resides in the cytoplasm. It localises to the nucleus. In terms of biological role, involved in basal disease resistance to bacterial blight (X.oryzae). May act as positive regulator of basal defense. Probably required for SCF-mediated ubiquitination, by coupling HSP90 to SCF complex for ubiquitination of HSP90 client proteins. The polypeptide is Protein SGT1 homolog (Oryza sativa subsp. japonica (Rice)).